The following is a 385-amino-acid chain: Mannitol-1-phosphate 5-dehydrogenase (385 aa).

3 to 14 (ALQFGAGNIGRG) lines the NAD(+) pocket.

Belongs to the mannitol dehydrogenase family.

The enzyme catalyses D-mannitol 1-phosphate + NAD(+) = beta-D-fructose 6-phosphate + NADH + H(+). The polypeptide is Mannitol-1-phosphate 5-dehydrogenase (Buchnera aphidicola subsp. Acyrthosiphon pisum (strain 5A)).